Here is a 206-residue protein sequence, read N- to C-terminus: Protein GET1 (206 aa).

At 1–4 (MPSL) the chain is on the lumenal side. A helical transmembrane segment spans residues 5-24 (LITVLFLNVIIYVVNTVGAA). Topologically, residues 25–110 (TVDGLLWLLY…TFDMTIKIAR (86 aa)) are cytoplasmic. Positions 75-100 (AKLRRRHDKALEAYEAKNNELTQSKS) form a coiled coil. The chain crosses the membrane as a helical span at residues 111–131 (WAATSGLMLFLQFWYSKTPIF). Over 132–155 (TLPPGWIPWQVQWVLSFPRAPMGT) the chain is Lumenal. The helical transmembrane segment at 156–172 (VSIQIWGGACATVVALV) threads the bilayer. The Cytoplasmic portion of the chain corresponds to 173–206 (GDAMKASLAYVSKPKIDRIKLGATMEGKEGKKRQ).

This sequence belongs to the WRB/GET1 family. As to quaternary structure, interacts with GET3.

It is found in the endoplasmic reticulum membrane. In terms of biological role, required for the post-translational delivery of tail-anchored (TA) proteins to the endoplasmic reticulum. Acts as a membrane receptor for soluble GET3, which recognizes and selectively binds the transmembrane domain of TA proteins in the cytosol. This Ajellomyces capsulatus (strain G186AR / H82 / ATCC MYA-2454 / RMSCC 2432) (Darling's disease fungus) protein is Protein GET1.